Consider the following 967-residue polypeptide: Translation initiation factor IF-2 (967 aa).

Disordered stretches follow at residues 201-320 (KPIV…PGFV) and 349-382 (LQGK…ELEA). A compositionally biased stretch (polar residues) spans 233–248 (TGPTFSGQTIDLSQFN). Low complexity predominate over residues 256 to 272 (PNKGGAKPAGAGNNNNN). Residues 354–363 (NKSKAAKYRR) show a composition bias toward basic residues. The span at 364 to 382 (DKRDTHRQKSDDEQRELEA) shows a compositional bias: basic and acidic residues. Residues 465–635 (HRAPIVTVMG…LLEAEVLDLK (171 aa)) form the tr-type G domain. The tract at residues 474-481 (GHVDHGKT) is G1. Residue 474–481 (GHVDHGKT) coordinates GTP. The G2 stretch occupies residues 499–503 (GITQH). The segment at 521-524 (DTPG) is G3. GTP-binding positions include 521–525 (DTPGH) and 575–578 (NKVD). The tract at residues 575-578 (NKVD) is G4. A G5 region spans residues 611–613 (SAK).

This sequence belongs to the TRAFAC class translation factor GTPase superfamily. Classic translation factor GTPase family. IF-2 subfamily.

It is found in the cytoplasm. In terms of biological role, one of the essential components for the initiation of protein synthesis. Protects formylmethionyl-tRNA from spontaneous hydrolysis and promotes its binding to the 30S ribosomal subunits. Also involved in the hydrolysis of GTP during the formation of the 70S ribosomal complex. This chain is Translation initiation factor IF-2, found in Flavobacterium psychrophilum (strain ATCC 49511 / DSM 21280 / CIP 103535 / JIP02/86).